We begin with the raw amino-acid sequence, 139 residues long: Ubiquitin-conjugating enzyme spm2 (139 aa).

The UBC core domain maps to 5–139; the sequence is PRNFKLLEEL…PQPPEGSTFF (135 aa).

This sequence belongs to the ubiquitin-conjugating enzyme family. As to quaternary structure, heterodimer with ubc13.

In terms of biological role, has a role in the DNA error-free postreplication repair (PRR) pathway. Lacks catalytic activity by itself. The ubc13/spm2 heterodimer catalyzes the synthesis of non-canonical poly-ubiquitin chains that are linked through 'Lys-63'. The polypeptide is Ubiquitin-conjugating enzyme spm2 (spm2) (Schizosaccharomyces pombe (strain 972 / ATCC 24843) (Fission yeast)).